A 129-amino-acid chain; its full sequence is Follitropin subunit beta (129 aa).

The signal sequence occupies residues 1-18; the sequence is MKSIQFCFFFCCWKAICC. Disulfide bonds link C21/C69, C35/C84, C38/C122, C46/C100, C50/C102, and C105/C112. N-linked (GlcNAc...) asparagine glycosylation is found at N25 and N42.

This sequence belongs to the glycoprotein hormones subunit beta family. In terms of assembly, heterodimer. The active follitropin is a heterodimer composed of an alpha chain/CGA shared with other hormones and a unique beta chain/FSHB shown here.

Its subcellular location is the secreted. Together with the alpha chain CGA constitutes follitropin, the follicle-stimulating hormone, and provides its biological specificity to the hormone heterodimer. Binds FSHR, a G protein-coupled receptor, on target cells to activate downstream signaling pathways. Follitropin is involved in follicle development and spermatogenesis in reproductive organs. This is Follitropin subunit beta (FSHB) from Cavia porcellus (Guinea pig).